Here is a 330-residue protein sequence, read N- to C-terminus: Transcription factor TGA5 (330 aa).

Over residues Met-1–Asp-13 the composition is skewed to polar residues. Positions Met-1–Arg-64 are disordered. Over residues Ser-35–Thr-47 the composition is skewed to basic and acidic residues. Residues Asp-44–Ala-107 enclose the bZIP domain. Coiled-coil stretches lie at residues Gln-45–Ser-98 and Glu-211–Asp-244. A basic motif region spans residues Lys-46 to Lys-66. Positions Leu-72–Leu-86 are leucine-zipper. A DOG1 domain is found at Ala-111–Arg-327.

Belongs to the bZIP family. As to quaternary structure, binds DNA as a dimer. Interaction with the Dof domain protein OBP1 enhances the binding to the ocs element. Interacts with NPR1, NPR3 and NPR4. Predominantly expressed in roots.

It localises to the nucleus. Transcriptional activator that binds specifically to the DNA sequence 5'-TGACG-3'. Recognizes ocs elements like the as-1 motif of the cauliflower mosaic virus 35S promoter. Binding to the as-1-like cis elements mediate auxin- and salicylic acid-inducible transcription. May be involved in the induction of the systemic acquired resistance (SAR) via its interaction with NPR1. Could also bind to the Hex-motif (5'-TGACGTGG-3') another cis-acting element found in plant histone promoters. This is Transcription factor TGA5 (TGA5) from Arabidopsis thaliana (Mouse-ear cress).